Reading from the N-terminus, the 137-residue chain is ATP synthase epsilon chain, chloroplastic (137 aa).

Belongs to the ATPase epsilon chain family. F-type ATPases have 2 components, CF(1) - the catalytic core - and CF(0) - the membrane proton channel. CF(1) has five subunits: alpha(3), beta(3), gamma(1), delta(1), epsilon(1). CF(0) has three main subunits: a, b and c.

The protein resides in the plastid. It is found in the chloroplast thylakoid membrane. Produces ATP from ADP in the presence of a proton gradient across the membrane. This is ATP synthase epsilon chain, chloroplastic from Oryza nivara (Indian wild rice).